A 353-amino-acid polypeptide reads, in one-letter code: tRNA-specific 2-thiouridylase MnmA 2 (353 aa).

6-13 (LLSGGVDS) is a binding site for ATP. Residues 92–94 (NPD) form an interaction with target base in tRNA region. Cysteine 97 functions as the Nucleophile in the catalytic mechanism. Cysteine 97 and cysteine 192 are joined by a disulfide. Glycine 120 provides a ligand contact to ATP. Residues 142–144 (KDQ) form an interaction with tRNA region. Cysteine 192 acts as the Cysteine persulfide intermediate in catalysis.

This sequence belongs to the MnmA/TRMU family.

It is found in the cytoplasm. The catalysed reaction is S-sulfanyl-L-cysteinyl-[protein] + uridine(34) in tRNA + AH2 + ATP = 2-thiouridine(34) in tRNA + L-cysteinyl-[protein] + A + AMP + diphosphate + H(+). Its function is as follows. Catalyzes the 2-thiolation of uridine at the wobble position (U34) of tRNA, leading to the formation of s(2)U34. The chain is tRNA-specific 2-thiouridylase MnmA 2 from Bacteroides fragilis (strain ATCC 25285 / DSM 2151 / CCUG 4856 / JCM 11019 / LMG 10263 / NCTC 9343 / Onslow / VPI 2553 / EN-2).